Here is a 316-residue protein sequence, read N- to C-terminus: Zinc finger protein 330 (316 aa).

The segment at 1 to 24 is disordered; the sequence is MPKKKTGARKKAENRREREKQLRA. Positions 3 to 11 match the Nuclear localization signal motif; it reads KKKTGARKK. Basic and acidic residues predominate over residues 10–22; the sequence is KKAENRREREKQL. C4-type zinc fingers lie at residues 42–58, 67–104, 129–149, and 175–189; these read CDKC…CYFC, CAQC…CDFC, CVEC…CSFC, and CVSC…CLRC. Residues 227–299 form a disordered region; that stretch reads SMSTRSLKFG…ESSDLFNNLN (73 aa). Residues 268-291 show a composition bias toward acidic residues; that stretch reads DDDEEEDEAEDEEEEDGKDSDAES. Ser-287 carries the phosphoserine modification.

This sequence belongs to the NOA36 family.

It localises to the nucleus. The protein resides in the nucleolus. Its subcellular location is the chromosome. It is found in the centromere. The protein is Zinc finger protein 330 (Znf330) of Mus musculus (Mouse).